The following is a 331-amino-acid chain: Phosphoribosylformylglycinamidine cyclo-ligase (331 aa).

It belongs to the AIR synthase family.

It localises to the cytoplasm. The enzyme catalyses 2-formamido-N(1)-(5-O-phospho-beta-D-ribosyl)acetamidine + ATP = 5-amino-1-(5-phospho-beta-D-ribosyl)imidazole + ADP + phosphate + H(+). It functions in the pathway purine metabolism; IMP biosynthesis via de novo pathway; 5-amino-1-(5-phospho-D-ribosyl)imidazole from N(2)-formyl-N(1)-(5-phospho-D-ribosyl)glycinamide: step 2/2. This Clostridium tetani (strain Massachusetts / E88) protein is Phosphoribosylformylglycinamidine cyclo-ligase.